The sequence spans 529 residues: GTPase Obg (529 aa).

In terms of domain architecture, Obg spans 2-159; that stretch reads ASFVDRVVLH…SDIVLELKSI (158 aa). The 184-residue stretch at 160 to 343 folds into the OBG-type G domain; the sequence is ADIALVGFPS…LGFAMAEIVK (184 aa). GTP is bound by residues 166-173, 191-195, 212-215, 295-298, and 324-326; these read GFPSAGKS, FTTLI, DVPG, NKVD, and SAT. Mg(2+) contacts are provided by serine 173 and threonine 193. The OCT domain occupies 363–447; sequence PRAVNETGFR…DDGVVFDWEP (85 aa). The tract at residues 461-529 is disordered; the sequence is GTDIRFADTG…ESGLDSGDES (69 aa). The segment covering 462-502 has biased composition (basic and acidic residues); the sequence is TDIRFADTGDRPTRSQKREEQQERRDAKAAARAELEAERKA.

Belongs to the TRAFAC class OBG-HflX-like GTPase superfamily. OBG GTPase family. In terms of assembly, monomer. Mg(2+) serves as cofactor.

It is found in the cytoplasm. Its function is as follows. An essential GTPase which binds GTP, GDP and possibly (p)ppGpp with moderate affinity, with high nucleotide exchange rates and a fairly low GTP hydrolysis rate. Plays a role in control of the cell cycle, stress response, ribosome biogenesis and in those bacteria that undergo differentiation, in morphogenesis control. The polypeptide is GTPase Obg (Pseudarthrobacter chlorophenolicus (strain ATCC 700700 / DSM 12829 / CIP 107037 / JCM 12360 / KCTC 9906 / NCIMB 13794 / A6) (Arthrobacter chlorophenolicus)).